An 89-amino-acid chain; its full sequence is Large ribosomal subunit protein bL28 (89 aa).

This sequence belongs to the bacterial ribosomal protein bL28 family.

This Chlamydia caviae (strain ATCC VR-813 / DSM 19441 / 03DC25 / GPIC) (Chlamydophila caviae) protein is Large ribosomal subunit protein bL28.